An 89-amino-acid chain; its full sequence is UPF0250 protein CV_3095 (89 aa).

It belongs to the UPF0250 family.

In Chromobacterium violaceum (strain ATCC 12472 / DSM 30191 / JCM 1249 / CCUG 213 / NBRC 12614 / NCIMB 9131 / NCTC 9757 / MK), this protein is UPF0250 protein CV_3095.